The sequence spans 1139 residues: Dual 3',5'-cyclic-AMP and -GMP phosphodiesterase beta (1139 aa).

Disordered regions lie at residues 1–42 (MGKV…NINK) and 154–177 (GISE…STSN). Topologically, residues 1–429 (MGKVEDFEEH…LNLNNWISSR (429 aa)) are cytoplasmic. Residues 9–22 (EHNKNSNQDIEKNV) show a composition bias toward basic and acidic residues. Positions 29–42 (NSNTINDQNENINK) are enriched in polar residues. Residues 430-450 (MIIIGIVMLILSFIIWPLTTW) form a helical membrane-spanning segment. Over 451–462 (SLKTSTWGRETY) the chain is Extracellular. Residues 463–483 (IIILFHTLMAINTLILIFFII) traverse the membrane as a helical segment. The Cytoplasmic segment spans residues 484–498 (IGSTELCKYSECMSY). The chain crosses the membrane as a helical span at residues 499 to 519 (VLFSLMVALWGLWNIAIGLTL). Topologically, residues 520-536 (EYNPNLSEMPTTTYELE) are extracellular. Residue Asn-524 is glycosylated (N-linked (GlcNAc...) asparagine). A helical membrane pass occupies residues 537–557 (MIYVLTYIYGFLPLVIIDIFF). Over 558–564 (PSRTKYN) the chain is Cytoplasmic. Residues 565–585 (WIIHLIFIFLNSSSIILVGSA) form a helical membrane-spanning segment. At 586–592 (KPDFVPE) the chain is on the extracellular side. The chain crosses the membrane as a helical span at residues 593 to 613 (IYVVFRILAYTTLCIFLYIGS). Residues 614–1139 (YTSELQIRYV…TLFFIKNVSD (526 aa)) lie on the Cytoplasmic side of the membrane. In terms of domain architecture, PDEase spans 775 to 1098 (INISQLTKMI…IMWDTLMKEE (324 aa)). The active-site Proton donor is the His-847. A nucleoside 3',5'-cyclic phosphate is bound at residue 847 to 851 (HNTIH). A divalent metal cation contacts are provided by His-851, His-887, Asp-888, and Asp-1000. 3 residues coordinate a nucleoside 3',5'-cyclic phosphate: Asp-888, Asp-1000, and Gln-1052.

Belongs to the cyclic nucleotide phosphodiesterase family. The cofactor is a divalent metal cation.

It is found in the cell membrane. The protein localises to the endoplasmic reticulum membrane. The enzyme catalyses 3',5'-cyclic GMP + H2O = GMP + H(+). It catalyses the reaction 3',5'-cyclic AMP + H2O = AMP + H(+). The protein operates within purine metabolism; 3',5'-cyclic GMP degradation; GMP from 3',5'-cyclic GMP: step 1/1. It functions in the pathway purine metabolism; 3',5'-cyclic AMP degradation; AMP from 3',5'-cyclic AMP: step 1/1. Plays a role in signal transduction by regulating the intracellular concentration of cyclic nucleotides cAMP and cGMP. Catalyzes the hydrolysis of both cAMP and cGMP to 5'-AMP and 5'-GMP, respectively. By regulating cAMP levels during the asexual blood stage and, thus PKA activation, required for merozoite invasion of erythrocytes and for the parasite development immediately following invasion. This chain is Dual 3',5'-cyclic-AMP and -GMP phosphodiesterase beta, found in Plasmodium falciparum (isolate 3D7).